A 240-amino-acid polypeptide reads, in one-letter code: GATA transcription factor 4 (240 aa).

Residues 104 to 124 (ISFTGKPRSRRSRAPAPSVAG) form a disordered region. Positions 109–116 (KPRSRRSR) match the Nuclear localization signal motif. The GATA-type zinc finger occupies 154–208 (ADGARRCTHCASEKTPQWRTGPLGPKTLCNACGVRYKSGRLVPEYRPASSPTFVL).

The protein belongs to the type IV zinc-finger family. Class A subfamily. In terms of tissue distribution, expressed in roots, flowers and leaves, and to a lower extent in stems.

It is found in the nucleus. Its function is as follows. Transcriptional activator that specifically binds 5'-GATA-3' or 5'-GAT-3' motifs within gene promoters. May be involved in the regulation of some light-responsive genes. The sequence is that of GATA transcription factor 4 (GATA4) from Arabidopsis thaliana (Mouse-ear cress).